Reading from the N-terminus, the 306-residue chain is Secreted RxLR effector protein 76 (306 aa).

Residues 1–21 (MSGAFYVFTALLLVASDQIAA) form the signal peptide. Residues 48–65 (RFLRGSRDEPDNLANEER) carry the RxLR-dEER motif. The disordered stretch occupies residues 105 to 142 (AAKAVKKRPRGAKAGRKMPRAAEAEAVKKVPRAGTAVK). Positions 107–123 (KAVKKRPRGAKAGRKMP) are enriched in basic residues.

It belongs to the RxLR effector family.

The protein resides in the secreted. The protein localises to the host nucleus. Functionally, secreted effector that partially suppresses the host cell death induced by cell death-inducing proteins. This is Secreted RxLR effector protein 76 from Plasmopara viticola (Downy mildew of grapevine).